The following is a 202-amino-acid chain: FMN-dependent NADH:quinone oxidoreductase 1 (202 aa).

Residues Ser-9, 15 to 17 (SAS), 95 to 98 (MYNF), and 139 to 142 (TSGG) each bind FMN.

This sequence belongs to the azoreductase type 1 family. Homodimer. It depends on FMN as a cofactor.

It catalyses the reaction 2 a quinone + NADH + H(+) = 2 a 1,4-benzosemiquinone + NAD(+). It carries out the reaction N,N-dimethyl-1,4-phenylenediamine + anthranilate + 2 NAD(+) = 2-(4-dimethylaminophenyl)diazenylbenzoate + 2 NADH + 2 H(+). In terms of biological role, quinone reductase that provides resistance to thiol-specific stress caused by electrophilic quinones. Its function is as follows. Also exhibits azoreductase activity. Catalyzes the reductive cleavage of the azo bond in aromatic azo compounds to the corresponding amines. This chain is FMN-dependent NADH:quinone oxidoreductase 1, found in Pseudomonas syringae pv. tomato (strain ATCC BAA-871 / DC3000).